The chain runs to 365 residues: DNA replication and repair protein RecF (365 aa).

Position 30 to 37 (30 to 37) interacts with ATP; sequence GQNGSGKT.

Belongs to the RecF family.

It is found in the cytoplasm. In terms of biological role, the RecF protein is involved in DNA metabolism; it is required for DNA replication and normal SOS inducibility. RecF binds preferentially to single-stranded, linear DNA. It also seems to bind ATP. This is DNA replication and repair protein RecF from Shewanella halifaxensis (strain HAW-EB4).